A 513-amino-acid chain; its full sequence is U3 small nucleolar RNA-associated protein 15 (513 aa).

WD repeat units follow at residues 37–78, 79–118, 124–162, 166–206, 210–247, and 250–294; these read KEHN…KTFS, RFKD…TILL, THPT…EPQL, GATD…STPI, NHDQ…KLYE, and NFNK…QVKF. The tract at residues 332-354 is disordered; the sequence is KKKEKRSSDKENAPASFNKNAKS.

Interacts with snoRNA U3. Interacts with MPP10. Component of the ribosomal small subunit (SSU) processome composed of at least 40 protein subunits and snoRNA U3. In the absence of snoRNA3, forms a complex with other t-UTPs. This complex can associate with pre-18S ribosomal RNAs.

The protein localises to the nucleus. It localises to the nucleolus. Functionally, involved in nucleolar processing of pre-18S ribosomal RNA. Required for optimal pre-ribosomal RNA transcription by RNA polymerase I together with a subset of U3 proteins required for transcription (t-UTPs). This chain is U3 small nucleolar RNA-associated protein 15 (UTP15), found in Saccharomyces cerevisiae (strain ATCC 204508 / S288c) (Baker's yeast).